The chain runs to 5073 residues: Malformin synthetase mlfA (5073 aa).

Residues 194-585 (ERHATNRPHS…CGRADTQVKL (392 aa)) form an adenylation 1 region. A Carrier 1 domain is found at 726–799 (SRLEQEVQLA…EAASLAEVQE (74 aa)). S760 carries the post-translational modification O-(pantetheine 4'-phosphoryl)serine. Residues 837–1268 (EDVFPCTTMQ…ALNTLSLLQA (432 aa)) are condensation 1. The tract at residues 1296-1685 (DRWVTRHPEG…GRKDTQVKLR (390 aa)) is adenylation 2. The Carrier 2 domain maps to 1823–1900 (TPASELERTL…QLAAEVGEPA (78 aa)). S1860 carries the post-translational modification O-(pantetheine 4'-phosphoryl)serine. Disordered regions lie at residues 1901–1930 (GQSA…DGVD) and 1963–1984 (GGSS…SSSK). Composition is skewed to low complexity over residues 1903–1927 (SASS…STND) and 1965–1982 (SSSN…SSSS). The condensation 2 stretch occupies residues 2031-2446 (EDIYPATALQ…AVSCSDTETL (416 aa)). Residues 2469 to 2861 (SRTPHAPAVC…IGRRDGQLKL (393 aa)) form an adenylation 3 region. In terms of domain architecture, Carrier 3 spans 2997 to 3073 (RPKTSQEQEM…QLICHLNSIR (77 aa)). S3034 is subject to O-(pantetheine 4'-phosphoryl)serine. Condensation regions lie at residues 3090 to 3555 (WVAL…TYDQ) and 3576 to 3995 (DIYP…EQLV). An adenylation 4 region spans residues 4020-4410 (HASRQAVCAW…VGRKDNQIKF (391 aa)). The region spanning 4544-4620 (MPSTAAERKM…DLGDQARSPN (77 aa)) is the Carrier 4 domain. Residue S4581 is modified to O-(pantetheine 4'-phosphoryl)serine. The segment at 4611–4633 (DLGDQARSPNADNQRVSTASSAG) is disordered. Residues 4617–4631 (RSPNADNQRVSTASS) show a composition bias toward polar residues. Residues 4657 to 4991 (DVLPTTSFQR…LQTIVQHQNN (335 aa)) form a condensation 5 region.

The protein belongs to the NRP synthetase family.

Its pathway is secondary metabolite biosynthesis. In terms of biological role, nonribosomal peptide synthetase; part of the gene cluster that mediates the biosynthesis of malformins, cyclic pentapeptides with a disulfide bond between 2 consecutive cysteins, that show potential anti-tumor as well as antimalarial and antitrypanosomal properties. The nonribosomal peptide synthetase mlfA is responsible of the formation of the cyclic pentapeptide. The malformin biosynthesis clusters in malformin-producing fungi also contain enzymes involved in the formation of the disulfide bond between the two consecutive cysteins within malformins, in addition to additional tailoring enzymes such as methyltransferases or oxidoreductases. They are also composed of up to 4 major facilitator superfamily transporters, and transcription factors probably involved in the regulation of the expression of those clusters. The protein is Malformin synthetase mlfA of Aspergillus tubingensis (strain CBS 134.48).